We begin with the raw amino-acid sequence, 250 residues long: Pyrroloquinoline-quinone synthase (250 aa).

It belongs to the PqqC family.

It catalyses the reaction 6-(2-amino-2-carboxyethyl)-7,8-dioxo-1,2,3,4,7,8-hexahydroquinoline-2,4-dicarboxylate + 3 O2 = pyrroloquinoline quinone + 2 H2O2 + 2 H2O + H(+). Its pathway is cofactor biosynthesis; pyrroloquinoline quinone biosynthesis. Its function is as follows. Ring cyclization and eight-electron oxidation of 3a-(2-amino-2-carboxyethyl)-4,5-dioxo-4,5,6,7,8,9-hexahydroquinoline-7,9-dicarboxylic-acid to PQQ. The protein is Pyrroloquinoline-quinone synthase of Xanthomonas campestris pv. campestris (strain 8004).